A 178-amino-acid chain; its full sequence is Large ribosomal subunit protein uL6 (178 aa).

This sequence belongs to the universal ribosomal protein uL6 family. As to quaternary structure, part of the 50S ribosomal subunit.

Its function is as follows. This protein binds to the 23S rRNA, and is important in its secondary structure. It is located near the subunit interface in the base of the L7/L12 stalk, and near the tRNA binding site of the peptidyltransferase center. This chain is Large ribosomal subunit protein uL6, found in Lactococcus lactis subsp. cremoris (strain SK11).